Reading from the N-terminus, the 533-residue chain is 2,3-bisphosphoglycerate-independent phosphoglycerate mutase (533 aa).

Aspartate 15 and serine 65 together coordinate Mn(2+). Residue serine 65 is the Phosphoserine intermediate of the active site. Substrate contacts are provided by residues histidine 126, 156–157 (RD), arginine 188, arginine 194, 258–261 (RPDR), and lysine 331. Aspartate 398, histidine 402, aspartate 439, histidine 440, and histidine 457 together coordinate Mn(2+).

The protein belongs to the BPG-independent phosphoglycerate mutase family. In terms of assembly, monomer. Requires Mn(2+) as cofactor.

It catalyses the reaction (2R)-2-phosphoglycerate = (2R)-3-phosphoglycerate. Its pathway is carbohydrate degradation; glycolysis; pyruvate from D-glyceraldehyde 3-phosphate: step 3/5. Catalyzes the interconversion of 2-phosphoglycerate and 3-phosphoglycerate. This Nostoc sp. (strain PCC 7120 / SAG 25.82 / UTEX 2576) protein is 2,3-bisphosphoglycerate-independent phosphoglycerate mutase.